The primary structure comprises 106 residues: Urease subunit beta (106 aa).

The protein belongs to the urease beta subunit family. As to quaternary structure, heterotrimer of UreA (gamma), UreB (beta) and UreC (alpha) subunits. Three heterotrimers associate to form the active enzyme. The apoenzyme interacts with an accessory complex composed of UreD, UreF and UreG, which is required for the assembly of the nickel containing metallocenter of UreC. The UreE protein may also play a direct role as a metallochaperone in nickel transfer to the urease apoprotein.

The protein resides in the cytoplasm. The enzyme catalyses urea + 2 H2O + H(+) = hydrogencarbonate + 2 NH4(+). It participates in nitrogen metabolism; urea degradation; CO(2) and NH(3) from urea (urease route): step 1/1. With respect to regulation, the apoenzyme can be activated in vitro in the presence of nickel ions and carbon dioxide, which promotes carboxylation of 'Lys-217' of the UreC (alpha) subunit. The protein is Urease subunit beta of Klebsiella aerogenes (Enterobacter aerogenes).